Reading from the N-terminus, the 250-residue chain is NAD(P)H-quinone oxidoreductase subunit S, chloroplastic (250 aa).

The N-terminal 48 residues, 1–48 (MATSSITIPTIRTPIHRSKFLGQTHQFSTVNRSVFPPPKQQSKLYQVK), are a transit peptide targeting the chloroplast. Residue K52 forms a Glycyl lysine isopeptide (Lys-Gly) (interchain with G-Cter in ubiquitin) linkage. Composition is skewed to basic and acidic residues over residues 76 to 94 (QRNIEDEQETSKAENNETE) and 106 to 115 (VPEDGFEKEM). 2 disordered regions span residues 76–163 (QRNI…KPKA) and 222–250 (REKGPPGKNPKSCILEPLIEQMQKEEAAP). Pro residues predominate over residues 136–146 (NPPPPPPPPPA).

Part of the chloroplast NDH complex, composed of a mixture of chloroplast and nucleus encoded subunits. Component of the electron donor-binding subcomplex, at least composed of NDHS, NDHT and NDHU. Interacts with the NDH subcomplex A via the protein NDHT and NDHU. In terms of processing, arg-193 is the critical site for the high affinity binding of NDH to ferredoxin.

The protein localises to the plastid. It localises to the chloroplast thylakoid membrane. It carries out the reaction a plastoquinone + NADH + (n+1) H(+)(in) = a plastoquinol + NAD(+) + n H(+)(out). It catalyses the reaction a plastoquinone + NADPH + (n+1) H(+)(in) = a plastoquinol + NADP(+) + n H(+)(out). Its function is as follows. NDH shuttles electrons from NAD(P)H:plastoquinone, via FMN and iron-sulfur (Fe-S) centers, to quinones in the photosynthetic chain and possibly in a chloroplast respiratory chain. The immediate electron acceptor for the enzyme in this species is believed to be plastoquinone. Couples the redox reaction to proton translocation, and thus conserves the redox energy in a proton gradient. Required for the efficient operation of ferredoxin-dependent plastoquinone reduction. Forms the electron donor-binding subcomplex in association with the NDHT and NDHU subunits. This is NAD(P)H-quinone oxidoreductase subunit S, chloroplastic from Arabidopsis thaliana (Mouse-ear cress).